Reading from the N-terminus, the 246-residue chain is UDP-N-acetyl-D-mannosaminuronic acid transferase (246 aa).

Belongs to the glycosyltransferase 26 family.

The enzyme catalyses UDP-N-acetyl-alpha-D-mannosaminouronate + N-acetyl-alpha-D-glucosaminyl-di-trans,octa-cis-undecaprenyl diphosphate = beta-D-ManNAcA-(1-&gt;4)-alpha-D-GlcNAc-di-trans,octa-cis-undecaprenyl diphosphate + UDP + H(+). Its pathway is bacterial outer membrane biogenesis; enterobacterial common antigen biosynthesis. In terms of biological role, catalyzes the synthesis of Und-PP-GlcNAc-ManNAcA (Lipid II), the second lipid-linked intermediate involved in enterobacterial common antigen (ECA) synthesis. The protein is UDP-N-acetyl-D-mannosaminuronic acid transferase of Escherichia coli O7:K1 (strain IAI39 / ExPEC).